We begin with the raw amino-acid sequence, 105 residues long: uncharacterized protein (105 aa).

It is found in the mitochondrion. This is an uncharacterized protein from Paramecium tetraurelia.